The chain runs to 663 residues: uncharacterized protein (663 aa).

The N-terminal stretch at 1-29 (MLDIGVIGRLKFATAFMAMSLLLVPAAEA) is a signal peptide.

The protein belongs to the bacterial solute-binding protein 5 family.

The protein resides in the periplasm. Its function is as follows. Possible binding-protein with either a transport or enzymatic activity. This is an uncharacterized protein from Sinorhizobium fredii (strain NBRC 101917 / NGR234).